The following is a 499-amino-acid chain: Protein singed wings 2 (499 aa).

The signal sequence occupies residues 1 to 29 (MPSGVFQKRPKAAETISLFCMILIRLSRA). LRR repeat units lie at residues 154-175 (ELHTINISWTNLSYISSRTFKR) and 178-199 (PLKVLDLRWNQLIQLDGPLLLP). The 56-residue stretch at 210–265 (NPWNCTRNFKWLLLQPEKGRLVVDRDELICTDRKYKERQMLMVMHYKLELKRQCQS) folds into the LRRCT 1 domain. 3 LRR repeats span residues 307-328 (NTTTLVINDNMISDINPLRDNP), 332-353 (HVVDMQLENNQISNVDNLEDTY), and 357-378 (NFRLLNLRGNNLRKLHVYALDN). The LRRCT 2 domain occupies 394 to 449 (NPWHCTCKFGSRMRELLTKYKDIVRDAWNVSCTYRLDDDQLLAKVLTLSRQEMCNL).

In terms of biological role, has a role in the ecdysone induced cascade; probably indirect control of 'late' ecdysone genes. The chain is Protein singed wings 2 from Drosophila melanogaster (Fruit fly).